The chain runs to 231 residues: uncharacterized protein (231 aa).

The next 4 helical transmembrane spans lie at 39–59 (FCIS…YGPF), 70–90 (ALSL…VPVI), 156–176 (AIIS…GGSI), and 189–206 (IVAI…NMFF).

The protein belongs to the FliR/MopE/SpaR family.

The protein resides in the cell membrane. This is an uncharacterized protein from Escherichia coli (strain K12).